Consider the following 504-residue polypeptide: Maturase K (504 aa).

This sequence belongs to the intron maturase 2 family. MatK subfamily.

The protein localises to the plastid. The protein resides in the chloroplast. In terms of biological role, usually encoded in the trnK tRNA gene intron. Probably assists in splicing its own and other chloroplast group II introns. This is Maturase K from Fagus japonica (Japanese beech).